A 372-amino-acid chain; its full sequence is MTSLPLTPVNPDAPARRAAMPPRHLADFDLAGRQTLVTELGEPRFRARQVSTHYFGRLVRDPEQMTDLPAATREKLADQLLPTLLTPVRELACDDGATHKALWRLHDGSLVESVLMGYPDRVTVCLSSQAGCGMACPFCATGQAGLTRNLSTAEIVDQAVYLAGVAASGAVAGSPPRLSRVVFMGMGEPLANYNRVVAAIRRLVAPSPEGLGLSQRHITVSTVGLVPAIRRLASEDLSVTLALSLHAPDDELRDELVPVNQRWKVSEVLEAAWEYAARTGRRVSIEYAMIKDVNDQPWRADLLGRLLADRLAHVNLIPLNPTPGSRWDASPKPVEREFVRRLRAAGVSTTVRDTRGREIDGACGQLAAAEGP.

Positions 1–20 (MTSLPLTPVNPDAPARRAAM) are disordered. The active-site Proton acceptor is the E112. A Radical SAM core domain is found at 118-357 (YPDRVTVCLS…STTVRDTRGR (240 aa)). C125 and C363 are disulfide-bonded. C132, C136, and C139 together coordinate [4Fe-4S] cluster. Residues 187 to 188 (GE), S221, 244 to 246 (SLH), and N320 each bind S-adenosyl-L-methionine. C363 (S-methylcysteine intermediate) is an active-site residue.

This sequence belongs to the radical SAM superfamily. RlmN family. It depends on [4Fe-4S] cluster as a cofactor.

The protein resides in the cytoplasm. The enzyme catalyses adenosine(2503) in 23S rRNA + 2 reduced [2Fe-2S]-[ferredoxin] + 2 S-adenosyl-L-methionine = 2-methyladenosine(2503) in 23S rRNA + 5'-deoxyadenosine + L-methionine + 2 oxidized [2Fe-2S]-[ferredoxin] + S-adenosyl-L-homocysteine. It catalyses the reaction adenosine(37) in tRNA + 2 reduced [2Fe-2S]-[ferredoxin] + 2 S-adenosyl-L-methionine = 2-methyladenosine(37) in tRNA + 5'-deoxyadenosine + L-methionine + 2 oxidized [2Fe-2S]-[ferredoxin] + S-adenosyl-L-homocysteine. In terms of biological role, specifically methylates position 2 of adenine 2503 in 23S rRNA and position 2 of adenine 37 in tRNAs. This chain is Probable dual-specificity RNA methyltransferase RlmN, found in Salinispora tropica (strain ATCC BAA-916 / DSM 44818 / JCM 13857 / NBRC 105044 / CNB-440).